The primary structure comprises 384 residues: 8-amino-7-oxononanoate synthase (384 aa).

Position 21 (arginine 21) interacts with substrate. Position 108–109 (108–109) interacts with pyridoxal 5'-phosphate; sequence GF. Residue histidine 133 participates in substrate binding. Pyridoxal 5'-phosphate contacts are provided by serine 179, histidine 207, and threonine 233. Lysine 236 carries the post-translational modification N6-(pyridoxal phosphate)lysine. A substrate-binding site is contributed by threonine 352.

The protein belongs to the class-II pyridoxal-phosphate-dependent aminotransferase family. BioF subfamily. As to quaternary structure, homodimer. The cofactor is pyridoxal 5'-phosphate.

It carries out the reaction 6-carboxyhexanoyl-[ACP] + L-alanine + H(+) = (8S)-8-amino-7-oxononanoate + holo-[ACP] + CO2. It functions in the pathway cofactor biosynthesis; biotin biosynthesis. Catalyzes the decarboxylative condensation of pimeloyl-[acyl-carrier protein] and L-alanine to produce 8-amino-7-oxononanoate (AON), [acyl-carrier protein], and carbon dioxide. The sequence is that of 8-amino-7-oxononanoate synthase from Escherichia coli O7:K1 (strain IAI39 / ExPEC).